We begin with the raw amino-acid sequence, 1342 residues long: DNA-directed RNA polymerase subunit beta (1342 aa).

N6-acetyllysine occurs at positions 1022 and 1200.

It belongs to the RNA polymerase beta chain family. As to quaternary structure, the RNAP catalytic core consists of 2 alpha, 1 beta, 1 beta' and 1 omega subunit. When a sigma factor is associated with the core the holoenzyme is formed, which can initiate transcription.

The catalysed reaction is RNA(n) + a ribonucleoside 5'-triphosphate = RNA(n+1) + diphosphate. Functionally, DNA-dependent RNA polymerase catalyzes the transcription of DNA into RNA using the four ribonucleoside triphosphates as substrates. In Escherichia fergusonii (strain ATCC 35469 / DSM 13698 / CCUG 18766 / IAM 14443 / JCM 21226 / LMG 7866 / NBRC 102419 / NCTC 12128 / CDC 0568-73), this protein is DNA-directed RNA polymerase subunit beta.